The primary structure comprises 298 residues: N-acetylmuramic acid 6-phosphate etherase (298 aa).

Residues Ala-55–Lys-218 form the SIS domain. Glu-83 (proton donor) is an active-site residue. Glu-114 is an active-site residue.

Belongs to the GCKR-like family. MurNAc-6-P etherase subfamily. As to quaternary structure, homodimer.

It carries out the reaction N-acetyl-D-muramate 6-phosphate + H2O = N-acetyl-D-glucosamine 6-phosphate + (R)-lactate. It participates in amino-sugar metabolism; N-acetylmuramate degradation. Its function is as follows. Specifically catalyzes the cleavage of the D-lactyl ether substituent of MurNAc 6-phosphate, producing GlcNAc 6-phosphate and D-lactate. The sequence is that of N-acetylmuramic acid 6-phosphate etherase from Lactobacillus johnsonii (strain CNCM I-12250 / La1 / NCC 533).